Here is a 1559-residue protein sequence, read N- to C-terminus: Arginine-glutamic acid dipeptide repeats protein (1559 aa).

Residues 1–36 are compositionally biased toward basic and acidic residues; it reads MTADKDKDKDKEKDRDRDRDRERDKRDKARESENAR. Residues 1–89 are disordered; it reads MTADKDKDKD…KKKSRYERTD (89 aa). Phosphoserine occurs at positions 53 and 56. Residues 73-84 are compositionally biased toward basic residues; sequence KSRKKPPKKKSR. In terms of domain architecture, BAH spans 102–282; that stretch reads VVYRPGDCVY…PETRRLNSTQ (181 aa). Thr-119 carries the post-translational modification Phosphothreonine. Phosphoserine occurs at positions 141 and 303. One can recognise an ELM2 domain in the interval 283–386; it reads GEIRVGPSHQ…KALQRLVKKP (104 aa). Residues 390 to 442 enclose the SANT domain; sequence LIEKCWTEDEVKRFVKGLRQYGKNFFRIRKELLPNKETGELITFYYYWKKTPE. Residues 463–494 are disordered; it reads TRTASTPVNTPSRPPSSEFLDLSSASEDDFDS. Over residues 464-473 the composition is skewed to polar residues; that stretch reads RTASTPVNTP. Over residues 478–487 the composition is skewed to low complexity; that stretch reads SSEFLDLSSA. Residues 507-532 form a GATA-type zinc finger; the sequence is RHCFTTTSKDWHHGGRENILLCTDCR. The tract at residues 541 to 1125 is disordered; sequence LPPIEKPVDP…PSHASQSARF (585 aa). Lys-559 is covalently cross-linked (Glycyl lysine isopeptide (Lys-Gly) (interchain with G-Cter in SUMO2)). Residues Ser-593, Ser-599, and Ser-612 each carry the phosphoserine modification. The span at 608–622 shows a compositional bias: low complexity; it reads SGRNSPSAASTSSND. Residues 623 to 639 show a composition bias toward basic and acidic residues; the sequence is SKAEAVKKSAKKVKEEA. Lys-636 is covalently cross-linked (Glycyl lysine isopeptide (Lys-Gly) (interchain with G-Cter in SUMO2)). A phosphoserine mark is found at Ser-641, Ser-655, Ser-674, and Ser-678. Residues 651–672 are compositionally biased toward basic and acidic residues; sequence EKVASDTEDTDRATSKKTKTQE. Residues 687 to 707 are compositionally biased toward basic and acidic residues; the sequence is SDSRSVNDEGSSDPKDIDQDN. The span at 708–735 shows a compositional bias: polar residues; that stretch reads RSTSPSIPSPQDNESDSDSSAQQQMLQT. Positions 736 to 761 are enriched in low complexity; that stretch reads QPPALQAPSGAASAPSTAPPGTTQLP. A compositionally biased stretch (polar residues) spans 768–791; the sequence is SATTVPPQGSPATSQPPNQTQSTV. The segment covering 805-822 has biased composition (pro residues); sequence LHPPRLPSPHPPLQPMTA. The span at 890-900 shows a compositional bias: low complexity; it reads QLPASQSALQP. Residues 901–931 show a composition bias toward pro residues; it reads QQPPREQPLPPAPLAMPHIKPPPTTPIPQLP. A compositionally biased stretch (low complexity) spans 961–971; it reads KPLSSLSTHHP. The segment covering 1027–1053 has biased composition (pro residues); sequence PQHPFVPGGPPPITPPSCPPTSTPPAG. Residues 1054-1068 show a composition bias toward low complexity; sequence PSSSSQPPCSAAVSS. 3 positions are modified to phosphoserine: Ser-1098, Ser-1105, and Ser-1107. The segment covering 1098–1109 has biased composition (pro residues); that stretch reads SPPPPPRSPSPE. Position 1111 is a phosphothreonine (Thr-1111). The stretch at 1148-1205 forms a coiled coil; that stretch reads GSKLAKKREEAIEKAKREAEQKAREEREREKEKEKEREREREREREAERAAQKASSSA. At Lys-1150 the chain carries N6-acetyllysine. Over residues 1154-1198 the composition is skewed to basic and acidic residues; that stretch reads KREEAIEKAKREAEQKAREEREREKEKEKEREREREREREAERAA. Residues 1154–1239 are disordered; it reads KREEAIEKAK…TTIAAVPPYI (86 aa). Tyr-1252 is subject to Phosphotyrosine. Ser-1259 is subject to Phosphoserine.

As to quaternary structure, interacts with HDAC1 and ATN1. Interaction with ATN1 is improved when the poly-Gln region of ATN1 is extended. Widely expressed.

It is found in the nucleus. It localises to the PML body. Plays a role as a transcriptional repressor during development. May play a role in the control of cell survival. Interacts with FAT1. This Rattus norvegicus (Rat) protein is Arginine-glutamic acid dipeptide repeats protein (Rere).